A 386-amino-acid chain; its full sequence is Acetate kinase (386 aa).

Residue N9 participates in Mg(2+) binding. K16 is a binding site for ATP. R74 lines the substrate pocket. D131 serves as the catalytic Proton donor/acceptor. ATP contacts are provided by residues 191-195, 265-267, and 313-317; these read HLGNG, DFR, and GVGEN. E367 is a Mg(2+) binding site.

This sequence belongs to the acetokinase family. As to quaternary structure, homodimer. Mg(2+) serves as cofactor. Mn(2+) is required as a cofactor.

The protein localises to the cytoplasm. The catalysed reaction is acetate + ATP = acetyl phosphate + ADP. Its pathway is metabolic intermediate biosynthesis; acetyl-CoA biosynthesis; acetyl-CoA from acetate: step 1/2. Functionally, catalyzes the formation of acetyl phosphate from acetate and ATP. Can also catalyze the reverse reaction. The sequence is that of Acetate kinase from Mycolicibacterium gilvum (strain PYR-GCK) (Mycobacterium gilvum (strain PYR-GCK)).